The primary structure comprises 718 residues: Polyribonucleotide nucleotidyltransferase (718 aa).

Mg(2+) is bound by residues Asp-487 and Asp-493. In terms of domain architecture, KH spans 554 to 613 (PRIETFKIPTDKIREVIGTGGKVIREIVEKTGAKVNIEDDGTVKVASSDGESIKAAIKWI). Positions 623–691 (GEIYEGTVVK…DRGKTRLSMR (69 aa)) constitute an S1 motif domain. The interval 694 to 718 (DQETGEDLEAKQKAEGEAPAQATGE) is disordered.

The protein belongs to the polyribonucleotide nucleotidyltransferase family. It depends on Mg(2+) as a cofactor.

Its subcellular location is the cytoplasm. The enzyme catalyses RNA(n+1) + phosphate = RNA(n) + a ribonucleoside 5'-diphosphate. Functionally, involved in mRNA degradation. Catalyzes the phosphorolysis of single-stranded polyribonucleotides processively in the 3'- to 5'-direction. This Rhodopseudomonas palustris (strain HaA2) protein is Polyribonucleotide nucleotidyltransferase.